The following is a 244-amino-acid chain: Acetoacetate decarboxylase (244 aa).

The active-site Schiff-base intermediate with acetoacetate is lysine 115.

It belongs to the ADC family. As to quaternary structure, homododecamer.

It catalyses the reaction acetoacetate + H(+) = acetone + CO2. Catalyzes the conversion of acetoacetate to acetone and carbon dioxide. The polypeptide is Acetoacetate decarboxylase (Clostridium acetobutylicum (strain ATCC 824 / DSM 792 / JCM 1419 / IAM 19013 / LMG 5710 / NBRC 13948 / NRRL B-527 / VKM B-1787 / 2291 / W)).